A 125-amino-acid chain; its full sequence is Subtelomeric hrmA-associated cluster protein cgnA (125 aa).

23 G-Q-I/R/S repeats span residues 11 to 13 (GQI), 14 to 16 (GPI), 17 to 19 (GQR), 20 to 22 (GQS), 23 to 25 (GQR), 26 to 28 (GQS), 29 to 31 (GQR), 32 to 34 (GQS), 35 to 37 (GQI), 38 to 40 (GQS), 41 to 43 (GQS), 44 to 46 (GQS), 47 to 49 (GQS), 50 to 52 (GQS), 53 to 55 (GQI), 56 to 58 (GQI), 59 to 61 (GQI), 62 to 64 (GQI), 65 to 67 (GQI), 68 to 70 (GQI), 71 to 73 (GQI), 74 to 76 (GQI), and 77 to 79 (GQA). The segment at 11–79 (GQIGPIGQRG…IGQIGQIGQA (69 aa)) is 23 X 3 AA approximate tandem repeats of G-Q-I/R/S. Positions 15–57 (PIGQRGQSGQRGQSGQRGQSGQIGQSGQSGQSGQSGQSGQIGQ) are disordered.

It is found in the secreted. In terms of biological role, hypoxia responsive morphology factor that modulates the expression of the subtelomeric hrmA-associated cluster (HAC) containing genes that alter the hyphal surface (such as reduced total chitin or increased beta-glucan exposure) and perturb inter-hyphal interactions within the developing biofilms, resulting in a loss of vertically aligned polarized growing filaments. Consequently, this hypoxia-typic morphotype (called H-MORPH) with altered biofilm architecture leads to increased hypoxia fitness, increased host inflammation, rapid disease progression, and mortality in a murine model of invasive aspergillosis. GcnA is directly involved in the reduction total surface chitin and the increase beta-glucan exposure, and mediates the detachment of the extracellular matrix and especially of its component galactosaminogalactan (GAG). The protein is Subtelomeric hrmA-associated cluster protein cgnA of Aspergillus fumigatus (strain CBS 144.89 / FGSC A1163 / CEA10) (Neosartorya fumigata).